Reading from the N-terminus, the 185-residue chain is MSTPSKKRLIRDFKRLSTDPPGGISGAPCADNLMIWNAVIFGPADTPFEDGTFKLVLTFDESYPNKPPTVKFLSKMFHPNVYANGELCLDILQNRWSPTYDVAAILTSIQSLLHDPNPNSPANAEAASLYRENMKEYVRRVKATVEASWLDDGEMPESIEEDDEAEAEAEAEATVDRSAPQTASA.

The UBC core domain maps to 4–150; sequence PSKKRLIRDF…VKATVEASWL (147 aa). The active-site Glycyl thioester intermediate is the Cys-88. The span at 149–173 shows a compositional bias: acidic residues; it reads WLDDGEMPESIEEDDEAEAEAEAEA. The interval 149-185 is disordered; that stretch reads WLDDGEMPESIEEDDEAEAEAEAEATVDRSAPQTASA.

This sequence belongs to the ubiquitin-conjugating enzyme family.

It is found in the cytoplasm. The protein localises to the nucleus. The enzyme catalyses S-ubiquitinyl-[E1 ubiquitin-activating enzyme]-L-cysteine + [E2 ubiquitin-conjugating enzyme]-L-cysteine = [E1 ubiquitin-activating enzyme]-L-cysteine + S-ubiquitinyl-[E2 ubiquitin-conjugating enzyme]-L-cysteine.. It functions in the pathway protein modification; protein ubiquitination. Functionally, catalyzes the covalent attachment of ubiquitin to other proteins. Plays a role in transcription regulation by catalyzing the monoubiquitination of histone H2B to form H2BK123ub1. H2BK123ub1 gives a specific tag for epigenetic transcriptional activation and is also a prerequisite for H3K4me and H3K79me formation. Also involved in postreplication repair of UV-damaged DNA, in N-end rule-dependent protein degradation and in sporulation. The protein is Ubiquitin-conjugating enzyme E2 2 (UBC2) of Mycosarcoma maydis (Corn smut fungus).